A 637-amino-acid chain; its full sequence is DNA mismatch repair protein MutL (637 aa).

2 disordered regions span residues 352-384 and 405-430; these read DDFT…NVLF and ASVE…AMEQ.

The protein belongs to the DNA mismatch repair MutL/HexB family.

This protein is involved in the repair of mismatches in DNA. It is required for dam-dependent methyl-directed DNA mismatch repair. May act as a 'molecular matchmaker', a protein that promotes the formation of a stable complex between two or more DNA-binding proteins in an ATP-dependent manner without itself being part of a final effector complex. The protein is DNA mismatch repair protein MutL of Halalkalibacterium halodurans (strain ATCC BAA-125 / DSM 18197 / FERM 7344 / JCM 9153 / C-125) (Bacillus halodurans).